A 417-amino-acid chain; its full sequence is UPF0754 membrane protein PCC8801_0398 (417 aa).

2 helical membrane passes run 11 to 31 and 395 to 415; these read FSLLWTIALPPIAGTIIGYFT and IVNIGGVLGFLVGVFQSILLI.

Belongs to the UPF0754 family.

The protein localises to the cell inner membrane. In Rippkaea orientalis (strain PCC 8801 / RF-1) (Cyanothece sp. (strain PCC 8801)), this protein is UPF0754 membrane protein PCC8801_0398.